The following is an 87-amino-acid chain: Large ribosomal subunit protein bL31B (87 aa).

The protein belongs to the bacterial ribosomal protein bL31 family. Type B subfamily. Part of the 50S ribosomal subunit.

The chain is Large ribosomal subunit protein bL31B from Paraburkholderia phymatum (strain DSM 17167 / CIP 108236 / LMG 21445 / STM815) (Burkholderia phymatum).